A 417-amino-acid polypeptide reads, in one-letter code: Methyltransferase/ribosomally synthesized cyclic peptide omphalotin A precursor ophMA (417 aa).

The methyltransferase domain stretch occupies residues 1-251 (METSTQTKAG…GVSTFYIPPK (251 aa)). Residues arginine 72, tyrosine 76, and tyrosine 98 contribute to the active site. S-adenosyl-L-methionine contacts are provided by tyrosine 98, histidine 100, valine 103, alanine 130, glutamine 172, alanine 213, serine 244, and threonine 245. The clasp domain stretch occupies residues 252–378 (ARKASNLDII…WAIRCAMKNM (127 aa)). The tract at residues 379 to 399 (PSSLLDAARESGEEASQNGFP) is precursor leader. N-methylvaline occurs at positions 401, 403, and 404. Glycine 405 carries the N-methylglycine modification. At valine 406 the chain carries N-methylvaline. Isoleucine 407 carries the post-translational modification N-methylisoleucine. Position 408 is an N-methylglycine (glycine 408). The residue at position 410 (isoleucine 410) is an N-methylisoleucine. Glycine 411 bears the N-methylglycine mark. The residue at position 413 (valine 413) is an N-methylvaline.

In the N-terminal section; belongs to the precorrin methyltransferase family. As to quaternary structure, homodimer. In terms of processing, ophMA automethylates at Val-401, Val-403, Val-404, Gly-405, Val-406, Ile-407, Gly-408, Ile-410, Gly-411 and Val-413 before being processed by the prolyloligopeptidase ophP which likely forms a peptidyl ester upon removal of the follower propeptide, which then undergoes macrocyclization with the N-terminus of the modified core peptide. Peptide backbone alpha-N-methylations change the physicochemical properties of amide bonds to provide structural constraints and other favorable characteristics including biological membrane permeability to peptides.

It functions in the pathway mycotoxin biosynthesis. Fusion protein of the methyltransferase ophM and the omphalotin core peptide; part of the gene cluster that mediates the biosynthesis of omphalotin A, a highly methylated cyclic dodecapeptide with nematodicidal activity. Omphalotin A derives from the C-terminus of the ophMA protein, and it is the ophMA protein that methylates its own C-terminus using S-adenosyl methionine (SAM). The C-terminus is subsequently cleaved off and macrocyclized by the prolyloligopeptidase ophP to give the final product. The protein is Methyltransferase/ribosomally synthesized cyclic peptide omphalotin A precursor ophMA of Omphalotus olearius (Jack o'lantern).